The primary structure comprises 555 residues: GMP synthase [glutamine-hydrolyzing] (555 aa).

Residues 8-234 (KILVLNFGSQ…AYNICKCKKQ (227 aa)) enclose the Glutamine amidotransferase type-1 domain. Catalysis depends on Cys89, which acts as the Nucleophile; for GATase activity. Gln93, Asn169, Asp172, and His208 together coordinate L-glutamine. Active-site for GATase activity residues include His208 and Glu210. Residues 235-430 (FDPIRYHELE…LNLPEEITNR (196 aa)) form the GMPS ATP-PPase domain. Residue 262–268 (SGGIDST) coordinates ATP. The XMP site is built by Arg336, Gln476, Lys547, Ile552, and Glu553.

As to quaternary structure, homodimer (via the GMPS ATP-PPase domain). It depends on Mg(2+) as a cofactor.

It catalyses the reaction XMP + L-glutamine + ATP + H2O = GMP + L-glutamate + AMP + diphosphate + 2 H(+). Its pathway is purine metabolism; GMP biosynthesis; GMP from XMP (L-Gln route): step 1/1. Its activity is regulated as follows. The GATase domain is allosterically activated by the binding of substrates, ATP and XMP, to the ATPPase domain, thus ensuring that glutamine hydrolysis occurs only when the ATPPase domain is primed to receive ammonia. Inhibited by Na(+). Inhibited by the reaction product GMP. Functionally, catalyzes the conversion of xanthine monophosphate (XMP) to GMP in the presence of glutamine and ATP through an adenyl-XMP intermediate, which is the final step of de novo synthesis of GMP. The conversion of XMP to GMP involves the coordinated action of the glutamine amidotransferase (GATase) domain that catalyzes the hydrolysis of the amide side chain of glutamine producing ammonia and the ATP pyrophosphatase (ATPPase) domain that catalyzes the synthesis of adenyl-XMP intermediate from ATP. The ammonia produced by the GATase domain is tunnelled to the ATP-PPase domain where it attacks the adenyl-XMP intermediate generating GMP. In Plasmodium falciparum (isolate 3D7), this protein is GMP synthase [glutamine-hydrolyzing].